Here is a 562-residue protein sequence, read N- to C-terminus: Dihydroxy-acid dehydratase (562 aa).

Mg(2+) is bound at residue Asp-80. Residue Cys-121 participates in [2Fe-2S] cluster binding. Residues Asp-122 and Lys-123 each contribute to the Mg(2+) site. An N6-carboxylysine modification is found at Lys-123. Cys-194 is a binding site for [2Fe-2S] cluster. Glu-446 provides a ligand contact to Mg(2+). The Proton acceptor role is filled by Ser-472.

Belongs to the IlvD/Edd family. In terms of assembly, homodimer. [2Fe-2S] cluster is required as a cofactor. Mg(2+) serves as cofactor.

The enzyme catalyses (2R)-2,3-dihydroxy-3-methylbutanoate = 3-methyl-2-oxobutanoate + H2O. It carries out the reaction (2R,3R)-2,3-dihydroxy-3-methylpentanoate = (S)-3-methyl-2-oxopentanoate + H2O. It functions in the pathway amino-acid biosynthesis; L-isoleucine biosynthesis; L-isoleucine from 2-oxobutanoate: step 3/4. Its pathway is amino-acid biosynthesis; L-valine biosynthesis; L-valine from pyruvate: step 3/4. Its function is as follows. Functions in the biosynthesis of branched-chain amino acids. Catalyzes the dehydration of (2R,3R)-2,3-dihydroxy-3-methylpentanoate (2,3-dihydroxy-3-methylvalerate) into 2-oxo-3-methylpentanoate (2-oxo-3-methylvalerate) and of (2R)-2,3-dihydroxy-3-methylbutanoate (2,3-dihydroxyisovalerate) into 2-oxo-3-methylbutanoate (2-oxoisovalerate), the penultimate precursor to L-isoleucine and L-valine, respectively. The protein is Dihydroxy-acid dehydratase of Staphylococcus haemolyticus (strain JCSC1435).